The primary structure comprises 285 residues: 4-hydroxybenzoate octaprenyltransferase (285 aa).

A run of 9 helical transmembrane segments spans residues 19–39 (IGSL…ADGL), 42–62 (WHVL…GCVI), 82–102 (LPSG…LVVC), 104–124 (FLLV…GIVL), 136–156 (YLPQ…AYAA), 166–186 (WLLF…YAMV), 210–230 (IIGL…SQLA), 233–253 (GIYY…QWLI), and 265–285 (FLNN…SVLI).

This sequence belongs to the UbiA prenyltransferase family. Requires Mg(2+) as cofactor.

The protein localises to the cell inner membrane. It carries out the reaction all-trans-octaprenyl diphosphate + 4-hydroxybenzoate = 4-hydroxy-3-(all-trans-octaprenyl)benzoate + diphosphate. It participates in cofactor biosynthesis; ubiquinone biosynthesis. Catalyzes the prenylation of para-hydroxybenzoate (PHB) with an all-trans polyprenyl group. Mediates the second step in the final reaction sequence of ubiquinone-8 (UQ-8) biosynthesis, which is the condensation of the polyisoprenoid side chain with PHB, generating the first membrane-bound Q intermediate 3-octaprenyl-4-hydroxybenzoate. In Aliivibrio fischeri (strain ATCC 700601 / ES114) (Vibrio fischeri), this protein is 4-hydroxybenzoate octaprenyltransferase.